The sequence spans 596 residues: Arginine--tRNA ligase (596 aa).

The 'HIGH' region signature appears at 128 to 138; sequence ANPTSSLHVGH.

The protein belongs to the class-I aminoacyl-tRNA synthetase family. As to quaternary structure, monomer.

Its subcellular location is the cytoplasm. It catalyses the reaction tRNA(Arg) + L-arginine + ATP = L-arginyl-tRNA(Arg) + AMP + diphosphate. The protein is Arginine--tRNA ligase of Acinetobacter baylyi (strain ATCC 33305 / BD413 / ADP1).